A 207-amino-acid polypeptide reads, in one-letter code: LexA repressor (207 aa).

Positions 28 to 48 (VREIGEAVGLASSSTVHGHLS) form a DNA-binding region, H-T-H motif. Residues serine 129 and lysine 167 each act as for autocatalytic cleavage activity in the active site.

This sequence belongs to the peptidase S24 family. As to quaternary structure, homodimer.

The catalysed reaction is Hydrolysis of Ala-|-Gly bond in repressor LexA.. In terms of biological role, represses a number of genes involved in the response to DNA damage (SOS response), including recA and lexA. In the presence of single-stranded DNA, RecA interacts with LexA causing an autocatalytic cleavage which disrupts the DNA-binding part of LexA, leading to derepression of the SOS regulon and eventually DNA repair. This chain is LexA repressor, found in Halalkalibacterium halodurans (strain ATCC BAA-125 / DSM 18197 / FERM 7344 / JCM 9153 / C-125) (Bacillus halodurans).